The chain runs to 195 residues: Transmembrane protein 239 (195 aa).

A run of 2 helical transmembrane segments spans residues leucine 105 to phenylalanine 125 and histidine 145 to phenylalanine 171.

Its subcellular location is the membrane. The chain is Transmembrane protein 239 (TMEM239) from Homo sapiens (Human).